Consider the following 126-residue polypeptide: Cell cycle protein GpsB (126 aa).

The stretch at 35-72 forms a coiled coil; sequence LDLVIKDYQTYQENIDRLTADNTRLFNKVEELNRQLSA.

Belongs to the GpsB family. In terms of assembly, forms polymers through the coiled coil domains. Interacts with PBP1, MreC and EzrA.

It localises to the cytoplasm. Its function is as follows. Divisome component that associates with the complex late in its assembly, after the Z-ring is formed, and is dependent on DivIC and PBP2B for its recruitment to the divisome. Together with EzrA, is a key component of the system that regulates PBP1 localization during cell cycle progression. Its main role could be the removal of PBP1 from the cell pole after pole maturation is completed. Also contributes to the recruitment of PBP1 to the division complex. Not essential for septum formation. The sequence is that of Cell cycle protein GpsB from Latilactobacillus sakei subsp. sakei (strain 23K) (Lactobacillus sakei subsp. sakei).